The following is a 769-amino-acid chain: Homoaconitase, mitochondrial (769 aa).

The N-terminal 28 residues, 1-28 (MQSRLLPSGPGRRWISLRVPNTPQRRAF), are a transit peptide targeting the mitochondrion. Positions 391, 460, and 463 each coordinate [4Fe-4S] cluster.

It belongs to the aconitase/IPM isomerase family. It depends on [4Fe-4S] cluster as a cofactor.

It localises to the mitochondrion. It carries out the reaction (2R,3S)-homoisocitrate = cis-homoaconitate + H2O. It functions in the pathway amino-acid biosynthesis; L-lysine biosynthesis via AAA pathway; L-alpha-aminoadipate from 2-oxoglutarate: step 3/5. Catalyzes the reversible hydration of cis-homoaconitate to (2R,3S)-homoisocitrate, a step in the alpha-aminoadipate pathway for lysine biosynthesis. In Aspergillus niger (strain ATCC MYA-4892 / CBS 513.88 / FGSC A1513), this protein is Homoaconitase, mitochondrial (lysA).